Consider the following 280-residue polypeptide: L-aspartate dehydrogenase (280 aa).

NAD(+) is bound by residues alanine 134 and asparagine 202. Residue histidine 232 is part of the active site.

The protein belongs to the L-aspartate dehydrogenase family.

The catalysed reaction is L-aspartate + NADP(+) + H2O = oxaloacetate + NH4(+) + NADPH + H(+). The enzyme catalyses L-aspartate + NAD(+) + H2O = oxaloacetate + NH4(+) + NADH + H(+). It functions in the pathway cofactor biosynthesis; NAD(+) biosynthesis; iminoaspartate from L-aspartate (dehydrogenase route): step 1/1. Its function is as follows. Specifically catalyzes the NAD or NADP-dependent dehydrogenation of L-aspartate to iminoaspartate. The polypeptide is L-aspartate dehydrogenase (Bradyrhizobium diazoefficiens (strain JCM 10833 / BCRC 13528 / IAM 13628 / NBRC 14792 / USDA 110)).